The sequence spans 86 residues: MKCSLRLFEKAGRLSVRSQTVQTFQQRIVLANGASYLVNTTLPKPYILSIKDITNMPLNNPKVNALSSIRGQESRRSKFEERYEGL.

The N-terminal 18 residues, 1–18, are a transit peptide targeting the mitochondrion; it reads MKCSLRLFEKAGRLSVRS.

It belongs to the bacterial ribosomal protein bL31 family. Highly divergent. In terms of assembly, component of the mitochondrial large ribosomal subunit (mt-LSU). Mature yeast 74S mitochondrial ribosomes consist of a small (37S) and a large (54S) subunit. The 37S small subunit contains a 15S ribosomal RNA (15S mt-rRNA) and at least 32 different proteins. The 54S large subunit contains a 21S rRNA (21S mt-rRNA) and at least 45 different proteins.

It localises to the mitochondrion. Functionally, component of the mitochondrial ribosome (mitoribosome), a dedicated translation machinery responsible for the synthesis of mitochondrial genome-encoded proteins, including at least some of the essential transmembrane subunits of the mitochondrial respiratory chain. The mitoribosomes are attached to the mitochondrial inner membrane and translation products are cotranslationally integrated into the membrane. In Schizosaccharomyces pombe (strain 972 / ATCC 24843) (Fission yeast), this protein is Large ribosomal subunit protein bL31m (tam9).